Here is a 483-residue protein sequence, read N- to C-terminus: Succinate semialdehyde dehydrogenase (483 aa).

NAD(+)-binding positions include 156–157 (WN), 180–183 (KPAP), and 233–234 (GS). The active-site Proton acceptor is Glu-255. Residue Leu-256 coordinates NAD(+). The active-site Nucleophile is Cys-289. Position 386 (Glu-386) interacts with NAD(+).

This sequence belongs to the aldehyde dehydrogenase family. As to quaternary structure, homotetramer.

It carries out the reaction succinate semialdehyde + NAD(+) + H2O = succinate + NADH + 2 H(+). Its function is as follows. Involved in the degradation of the pyridine ring of trigonelline (TG; N-methylnicotinate) into succinate and methylamine as carbon and nitrogen sources, respectively. Catalyzes the NAD(+)-dependent oxidation of succinate semialdehyde to succinate. The sequence is that of Succinate semialdehyde dehydrogenase from Acinetobacter baylyi (strain ATCC 33305 / BD413 / ADP1).